A 476-amino-acid polypeptide reads, in one-letter code: UPF0481 protein At3g47200 (476 aa).

The disordered stretch occupies residues 1–24; sequence MADKTDIISSSSDKASPPPPSAFR. 2 helical membrane passes run 133–153 and 439–459; these read LMFM…IMSG and AVLF…LSYL.

This sequence belongs to the UPF0481 family.

The protein localises to the membrane. The sequence is that of UPF0481 protein At3g47200 from Arabidopsis thaliana (Mouse-ear cress).